The following is a 714-amino-acid chain: Pre-mRNA-splicing factor CLF1 (714 aa).

HAT repeat units lie at residues 48–80 (SFQL…WEVK), 83–115 (HDFP…FELS), 117–149 (KNIT…TEET), 151–182 (KNYQ…YEKR), 184–215 (DEYD…FEMN), 265–305 (KEYE…FEKS), 315–347 (SIMI…ILQQ), 349–384 (DNNE…IWVK), 394–430 (GSIE…FEIR), 435–470 (NGLA…LEQK), 472–510 (GEWD…FEKN), and 555–586 (MRYA…FESS).

This sequence belongs to the crooked-neck family. In terms of assembly, associated with the spliceosome.

The protein localises to the nucleus. Functionally, involved in pre-mRNA splicing and cell cycle progression. Required for the spliceosome assembly and initiation of the DNA replication. This Debaryomyces hansenii (strain ATCC 36239 / CBS 767 / BCRC 21394 / JCM 1990 / NBRC 0083 / IGC 2968) (Yeast) protein is Pre-mRNA-splicing factor CLF1 (CLF1).